Reading from the N-terminus, the 185-residue chain is Ribosome-recycling factor (185 aa).

This sequence belongs to the RRF family.

Its subcellular location is the cytoplasm. Functionally, responsible for the release of ribosomes from messenger RNA at the termination of protein biosynthesis. May increase the efficiency of translation by recycling ribosomes from one round of translation to another. This is Ribosome-recycling factor from Wigglesworthia glossinidia brevipalpis.